The primary structure comprises 888 residues: Semaphorin-6B (888 aa).

The signal sequence occupies residues 1–25; the sequence is MQTPRASPPRPALLLLLLLLGGAHG. At 26–603 the chain is on the extracellular side; sequence LFPEEPPPLS…VSVNLLVTSS (578 aa). Residues 31–523 enclose the Sema domain; it reads PPPLSVAPRD…FPRCVVRVPV (493 aa). Asn-74 carries an N-linked (GlcNAc...) asparagine glycan. Intrachain disulfides connect Cys-116–Cys-126 and Cys-144–Cys-153. Residues Asn-155, Asn-167, and Asn-291 are each glycosylated (N-linked (GlcNAc...) asparagine). Cystine bridges form between Cys-267-Cys-378 and Cys-292-Cys-337. Residues Asn-386, Asn-441, and Asn-462 are each glycosylated (N-linked (GlcNAc...) asparagine). Disulfide bonds link Cys-486/Cys-517, Cys-526/Cys-544, Cys-532/Cys-578, and Cys-536/Cys-552. The chain crosses the membrane as a helical span at residues 604–624; that stretch reads VAAFVVGAVVSGFSVGWFVGL. The Cytoplasmic portion of the chain corresponds to 625 to 888; it reads RERRELARRK…GADRTAPPVP (264 aa). 3 disordered regions span residues 651 to 679, 695 to 742, and 757 to 888; these read VSRL…PPEA, LQGG…HPLL, and RAPE…PPVP. Positions 661–674 are enriched in gly residues; the sequence is GPGGRGGGGGGGAG. Residue Arg-665 is modified to Omega-N-methylarginine. The segment covering 706-717 has biased composition (low complexity); the sequence is LLPTPEQTPLPQ.

Belongs to the semaphorin family. (Microbial infection) Interacts with P.sordellii toxin TcsL; semaphorins SEMA6A and SEMA6B constitute the major host receptors for TcsL in the vascular endothelium. As to expression, expressed in the brain in GABAergic neurons.

The protein localises to the cell membrane. Functionally, functions as a cell surface repellent for mossy fibers of developing neurons in the hippocampus where it plays a role in axon guidance. May function through the PLXNA4 receptor expressed by mossy cell axons. (Microbial infection) Acts as a receptor for P.sordellii toxin TcsL in the in the vascular endothelium. The protein is Semaphorin-6B (SEMA6B) of Homo sapiens (Human).